We begin with the raw amino-acid sequence, 494 residues long: UPF0371 protein SUB1165 (494 aa).

It belongs to the UPF0371 family.

The sequence is that of UPF0371 protein SUB1165 from Streptococcus uberis (strain ATCC BAA-854 / 0140J).